A 768-amino-acid chain; its full sequence is Ribosomal RNA large subunit methyltransferase K/L (768 aa).

Residues 60–175 (DLYKICLWSR…DKQAELYLDL (116 aa)) enclose the THUMP domain.

The protein belongs to the methyltransferase superfamily. RlmKL family.

The protein localises to the cytoplasm. It catalyses the reaction guanosine(2445) in 23S rRNA + S-adenosyl-L-methionine = N(2)-methylguanosine(2445) in 23S rRNA + S-adenosyl-L-homocysteine + H(+). It carries out the reaction guanosine(2069) in 23S rRNA + S-adenosyl-L-methionine = N(2)-methylguanosine(2069) in 23S rRNA + S-adenosyl-L-homocysteine + H(+). In terms of biological role, specifically methylates the guanine in position 2445 (m2G2445) and the guanine in position 2069 (m7G2069) of 23S rRNA. In Psychrobacter arcticus (strain DSM 17307 / VKM B-2377 / 273-4), this protein is Ribosomal RNA large subunit methyltransferase K/L.